We begin with the raw amino-acid sequence, 377 residues long: UPF0754 membrane protein lin2327 (377 aa).

The next 2 helical transmembrane spans lie at 1–21 (MSVLFTILLMAVIGGFIGAMT) and 357–377 (YLGGILGGFIGIIQGILAMWI).

It belongs to the UPF0754 family.

The protein localises to the cell membrane. The chain is UPF0754 membrane protein lin2327 from Listeria innocua serovar 6a (strain ATCC BAA-680 / CLIP 11262).